A 537-amino-acid polypeptide reads, in one-letter code: Multidrug resistance protein Stp (537 aa).

The next 14 membrane-spanning stretches (helical) occupy residues 6 to 26, 46 to 66, 77 to 97, 104 to 124, 136 to 156, 163 to 183, 200 to 220, 223 to 243, 262 to 282, 300 to 320, 327 to 347, 352 to 372, 397 to 417, and 478 to 498; these read LLTLIATGLGLFMIFLDALIV, WVVASYSLGMAVFIMSAATLA, IGVSLFTLGSIACGLAPSIAV, AQGLGAAAVSVTSLALVSAAF, IWTAIASIGTTTGPTLGGLLV, SIFYVNLPMGALVLFLTLCYV, LLFIVAVGALVYAVIEGPQIG, SVQTIVMLWTAAVGCALFVWL, YALAIATICTVFFAVYGMLLL, LMILPFSAAVAIVSPLVGHLV, VPILAGLCMLMLGLLMLIFSE, ALVLVGLGLCGSGVALCLTPI, AIGSTIGFAVLGSVLAAWLSA, and VALLVATATLAVVFLAGWRWF.

This sequence belongs to the major facilitator superfamily. EmrB family.

The protein resides in the cell membrane. In terms of biological role, contributes to spectinomycin and tetracycline resistance. The sequence is that of Multidrug resistance protein Stp (stp) from Mycobacterium tuberculosis (strain ATCC 25618 / H37Rv).